The chain runs to 122 residues: Large ribosomal subunit protein uL14 (122 aa).

Belongs to the universal ribosomal protein uL14 family. In terms of assembly, part of the 50S ribosomal subunit. Forms a cluster with proteins L3 and L19. In the 70S ribosome, L14 and L19 interact and together make contacts with the 16S rRNA in bridges B5 and B8.

In terms of biological role, binds to 23S rRNA. Forms part of two intersubunit bridges in the 70S ribosome. This Chlamydia trachomatis serovar L2 (strain ATCC VR-902B / DSM 19102 / 434/Bu) protein is Large ribosomal subunit protein uL14.